Here is a 605-residue protein sequence, read N- to C-terminus: Glucose-6-phosphate isomerase (605 aa).

The active-site Proton donor is glutamate 410. Residues histidine 441 and lysine 569 contribute to the active site.

Belongs to the GPI family.

Its subcellular location is the cytoplasm. The enzyme catalyses alpha-D-glucose 6-phosphate = beta-D-fructose 6-phosphate. It functions in the pathway carbohydrate degradation; glycolysis; D-glyceraldehyde 3-phosphate and glycerone phosphate from D-glucose: step 2/4. This chain is Glucose-6-phosphate isomerase (PGI), found in Leishmania mexicana.